Consider the following 486-residue polypeptide: Protein DETOXIFICATION 16 (486 aa).

A run of 12 helical transmembrane segments spans residues 35–55 (GPLI…VMFV), 68–88 (IATS…ASAL), 117–137 (LASI…VFFG), 142–162 (IATL…AYGL), 179–199 (VVFC…VLVF), 207–227 (GAAL…FCYV), 259–279 (ALMV…SGLL), 288–308 (VLSI…GLSG), 331–351 (RVVI…LILI), 365–385 (VVSY…LDSL), 401–421 (IGAI…GLLL), and 433–453 (WLGI…VTIF).

The protein belongs to the multi antimicrobial extrusion (MATE) (TC 2.A.66.1) family.

The protein localises to the membrane. This is Protein DETOXIFICATION 16 from Arabidopsis thaliana (Mouse-ear cress).